The chain runs to 253 residues: Malonyl-[acyl-carrier protein] O-methyltransferase (253 aa).

It belongs to the methyltransferase superfamily.

The enzyme catalyses malonyl-[ACP] + S-adenosyl-L-methionine = malonyl-[ACP] methyl ester + S-adenosyl-L-homocysteine. It functions in the pathway cofactor biosynthesis; biotin biosynthesis. In terms of biological role, converts the free carboxyl group of a malonyl-thioester to its methyl ester by transfer of a methyl group from S-adenosyl-L-methionine (SAM). It allows to synthesize pimeloyl-ACP via the fatty acid synthetic pathway. In Pectobacterium atrosepticum (strain SCRI 1043 / ATCC BAA-672) (Erwinia carotovora subsp. atroseptica), this protein is Malonyl-[acyl-carrier protein] O-methyltransferase.